We begin with the raw amino-acid sequence, 156 residues long: Insulin (156 aa).

Positions 1 to 31 (MSKFLLQSHSANACLLTLLLTLASNLDISLA) are cleaved as a signal peptide. Cystine bridges form between Cys-37-Cys-114, Cys-49-Cys-119, Cys-61-Cys-128, and Cys-112-Cys-115. A propeptide spans 79 to 93 (DTENVNDKLRGILLN) (c peptide beta). The propeptide at 96–102 (EAFSYLT) is c peptide alpha. Positions 141–156 (TGRSNSGHAQLEDNFS) are cleaved as a propeptide — d peptide. A propeptide spans 144 to 156 (SNSGHAQLEDNFS) (d peptide short form). The residue at position 152 (Glu-152) is a 4-carboxyglutamate.

Belongs to the insulin family. In terms of assembly, heterodimer of a B chain or a B chain' and an A chain probably linked by three disulfide bonds. Expressed in the central region of the cerebral ganglia mostly within the F and C clusters.

The protein localises to the secreted. Functionally, involved in glucose metabolism. This is Insulin (PIN) from Aplysia californica (California sea hare).